The chain runs to 271 residues: Glutamate racemase (271 aa).

Substrate-binding positions include 12-13 (DS) and 44-45 (YG). Residue Cys75 is the Proton donor/acceptor of the active site. Residue 76–77 (NS) participates in substrate binding. Residue Cys185 is the Proton donor/acceptor of the active site. 186–187 (TH) serves as a coordination point for substrate.

Belongs to the aspartate/glutamate racemases family.

It carries out the reaction L-glutamate = D-glutamate. The protein operates within cell wall biogenesis; peptidoglycan biosynthesis. Functionally, provides the (R)-glutamate required for cell wall biosynthesis. The protein is Glutamate racemase of Mycobacterium bovis (strain ATCC BAA-935 / AF2122/97).